Consider the following 166-residue polypeptide: Ribosome maturation factor RimM (166 aa).

A PRC barrel domain is found at 90-163 (EGQYFIKDII…KIVIKAVEEW (74 aa)).

It belongs to the RimM family. Binds ribosomal protein uS19.

It localises to the cytoplasm. In terms of biological role, an accessory protein needed during the final step in the assembly of 30S ribosomal subunit, possibly for assembly of the head region. Essential for efficient processing of 16S rRNA. May be needed both before and after RbfA during the maturation of 16S rRNA. It has affinity for free ribosomal 30S subunits but not for 70S ribosomes. The sequence is that of Ribosome maturation factor RimM from Clostridium acetobutylicum (strain ATCC 824 / DSM 792 / JCM 1419 / IAM 19013 / LMG 5710 / NBRC 13948 / NRRL B-527 / VKM B-1787 / 2291 / W).